The sequence spans 356 residues: tRNA N6-adenosine threonylcarbamoyltransferase (356 aa).

Residues histidine 115 and histidine 119 each coordinate Fe cation. Residues 138–142 (LVSGG), aspartate 171, glycine 184, and asparagine 283 each bind substrate. Residue aspartate 311 coordinates Fe cation.

Belongs to the KAE1 / TsaD family. Fe(2+) serves as cofactor.

It is found in the cytoplasm. The enzyme catalyses L-threonylcarbamoyladenylate + adenosine(37) in tRNA = N(6)-L-threonylcarbamoyladenosine(37) in tRNA + AMP + H(+). Functionally, required for the formation of a threonylcarbamoyl group on adenosine at position 37 (t(6)A37) in tRNAs that read codons beginning with adenine. Is involved in the transfer of the threonylcarbamoyl moiety of threonylcarbamoyl-AMP (TC-AMP) to the N6 group of A37, together with TsaE and TsaB. TsaD likely plays a direct catalytic role in this reaction. The chain is tRNA N6-adenosine threonylcarbamoyltransferase from Prochlorococcus marinus (strain MIT 9215).